Consider the following 508-residue polypeptide: Glycerol kinase (508 aa).

An ADP-binding site is contributed by Thr-15. ATP-binding residues include Thr-15, Ser-16, and Ser-17. Thr-15 provides a ligand contact to sn-glycerol 3-phosphate. An ADP-binding site is contributed by Arg-19. Positions 85, 86, 138, and 251 each coordinate sn-glycerol 3-phosphate. Glycerol-binding residues include Arg-85, Glu-86, Tyr-138, Asp-251, and Gln-252. ADP-binding residues include Thr-273, Gly-317, and Gly-419. ATP is bound by residues Thr-273, Gly-317, and Gly-419.

The protein belongs to the FGGY kinase family.

It catalyses the reaction glycerol + ATP = sn-glycerol 3-phosphate + ADP + H(+). The protein operates within polyol metabolism; glycerol degradation via glycerol kinase pathway; sn-glycerol 3-phosphate from glycerol: step 1/1. Its activity is regulated as follows. Inhibited by fructose 1,6-bisphosphate (FBP). Its function is as follows. Key enzyme in the regulation of glycerol uptake and metabolism. Catalyzes the phosphorylation of glycerol to yield sn-glycerol 3-phosphate. This chain is Glycerol kinase, found in Mycoplasma pneumoniae (strain ATCC 29342 / M129 / Subtype 1) (Mycoplasmoides pneumoniae).